Here is a 221-residue protein sequence, read N- to C-terminus: Deoxyribose-phosphate aldolase (221 aa).

The active-site Proton donor/acceptor is the aspartate 89. The active-site Schiff-base intermediate with acetaldehyde is the lysine 151. Lysine 180 serves as the catalytic Proton donor/acceptor.

It belongs to the DeoC/FbaB aldolase family. DeoC type 1 subfamily.

It is found in the cytoplasm. It catalyses the reaction 2-deoxy-D-ribose 5-phosphate = D-glyceraldehyde 3-phosphate + acetaldehyde. The protein operates within carbohydrate degradation; 2-deoxy-D-ribose 1-phosphate degradation; D-glyceraldehyde 3-phosphate and acetaldehyde from 2-deoxy-alpha-D-ribose 1-phosphate: step 2/2. Functionally, catalyzes a reversible aldol reaction between acetaldehyde and D-glyceraldehyde 3-phosphate to generate 2-deoxy-D-ribose 5-phosphate. The sequence is that of Deoxyribose-phosphate aldolase from Mesomycoplasma hyopneumoniae (strain 232) (Mycoplasma hyopneumoniae).